The following is a 333-amino-acid chain: Alpha-N-acetylgalactosaminide alpha-2,6-sialyltransferase 6 (333 aa).

Residues 1–12 (MACSRPPSQCDP) are compositionally biased toward polar residues. Positions 1-27 (MACSRPPSQCDPTTLPPGPPAGRWPLP) are disordered. Residues 1–43 (MACSRPPSQCDPTTLPPGPPAGRWPLPFSRRRREMSSNKEQRS) lie on the Cytoplasmic side of the membrane. The helical; Signal-anchor for type II membrane protein transmembrane segment at 44–64 (AVFVILFALITILILYSSNSA) threads the bilayer. The Lumenal portion of the chain corresponds to 65–333 (NEVFHYGSLR…GITFSHPSWT (269 aa)). Asn-98 carries N-linked (GlcNAc...) asparagine glycosylation. A disulfide bridge links Cys-108 with Cys-256.

This sequence belongs to the glycosyltransferase 29 family. In terms of tissue distribution, widely expressed, the gene expression is most abundant in colon, brain, liver, and heart.

It localises to the golgi apparatus membrane. It carries out the reaction a ganglioside GM1b (d18:1(4E)) + CMP-N-acetyl-beta-neuraminate = a ganglioside GD1alpha (d18:1(4E)) + CMP + H(+). The enzyme catalyses a ganglioside GD1a (d18:1(4E)) + CMP-N-acetyl-beta-neuraminate = a ganglioside GT1aalpha (d18:1(4E)) + CMP + H(+). It catalyses the reaction a ganglioside GT1b (d18:1(4E)) + CMP-N-acetyl-beta-neuraminate = a ganglioside GQ1balpha (d18:1(4E)) + CMP + H(+). The catalysed reaction is N-acetyl-alpha-neuraminosyl-(2-&gt;3)-beta-D-galactosyl-(1-&gt;3)-N-acetyl-beta-D-glucosaminyl-(1-&gt;3)-beta-D-galactosyl-(1-&gt;4)-beta-D-glucosyl-(1&lt;-&gt;1')-N-acyl-sphing-4-enine + CMP-N-acetyl-beta-neuraminate = N-acetyl-alpha-neuraminosyl-(2-&gt;3)-beta-D-galactosyl-(1-&gt;3)-[N-acetyl-alpha-neuraminosyl-(2-&gt;6)]-N-acetyl-beta-D-glucosaminyl-(1-&gt;3)-beta-D-galactosyl-(1-&gt;4)-beta-D-glucosyl-(1&lt;-&gt;1')-N-acyl-sphing-4-enine + CMP + H(+). It carries out the reaction a globoside MSGG + CMP-N-acetyl-beta-neuraminate = a globoside DSGG + CMP + H(+). The enzyme catalyses 3-O-[alpha-Neu5Ac-(2-&gt;3)-beta-D-Gal-(1-&gt;3)-alpha-D-GalNAc]-L-Ser-[protein] + CMP-N-acetyl-beta-neuraminate = a 3-O-{alpha-Neu5Ac-(2-&gt;3)-beta-D-Gal-(1-&gt;3)-[alpha-Neu5Ac-(2-&gt;6)]-alpha-D-GalNAc}-L-seryl-[protein] + CMP + H(+). It catalyses the reaction 3-O-[alpha-Neu5Ac-(2-&gt;3)-beta-D-Gal-(1-&gt;3)-alpha-D-GalNAc]-L-Thr-[protein] + CMP-N-acetyl-beta-neuraminate = a 3-O-{alpha-Neu5Ac-(2-&gt;3)-beta-D-Gal-(1-&gt;3)-[alpha-Neu5Ac-(2-&gt;6)]-alpha-D-GalNAc}-L-threonyl-[protein] + CMP + H(+). In terms of biological role, transfers the sialyl group (N-acetyl-alpha-neuraminyl or NeuAc) from CMP-NeuAc onto glycolipids, forming an alpha-2,6-linkage. Produces branched type disialyl structures by transfer of a sialyl group onto the GalNAc or GlcNAc residue inside backbone core chains having a terminal sialic acid with an alpha-2,3-linkage on Gal. ST6GalNAcVI prefers glycolipids to glycoproteins, predominantly catalyzing the biosynthesis of ganglioside GD1alpha from GM1b. Also has activity toward GD1a and GT1b, and can generate DSGG (disialylgalactosylgloboside) from MSGG (monosialylgalactosylgloboside). Besides GMb1, MSGG and other glycolipids, it shows activity towards sialyl Lc4Cer generating disialyl Lc4Cer, which can lead to the synthesis of disialyl Lewis a (Le(a)), suggested to be a cancer-associated antigen. The chain is Alpha-N-acetylgalactosaminide alpha-2,6-sialyltransferase 6 (St6galnac6) from Mus musculus (Mouse).